We begin with the raw amino-acid sequence, 229 residues long: Cytidylate kinase (229 aa).

Residue 12–20 (GPSGAGKGT) coordinates ATP.

The protein belongs to the cytidylate kinase family. Type 1 subfamily.

Its subcellular location is the cytoplasm. The catalysed reaction is CMP + ATP = CDP + ADP. It catalyses the reaction dCMP + ATP = dCDP + ADP. This Pseudomonas paraeruginosa (strain DSM 24068 / PA7) (Pseudomonas aeruginosa (strain PA7)) protein is Cytidylate kinase.